Here is a 97-residue protein sequence, read N- to C-terminus: UPF0390 protein CNBD1430 (97 aa).

Disordered regions lie at residues 1-57 and 75-97; these read MAQG…INNS and RNVGELESGEGKDGKAKGKGKSR. Basic and acidic residues predominate over residues 29 to 46; sequence GKREVAPKDRQRVLERSQ. Positions 48 to 57 are enriched in polar residues; the sequence is KQLSSKINNS.

Belongs to the UPF0390 family.

The polypeptide is UPF0390 protein CNBD1430 (Cryptococcus neoformans var. neoformans serotype D (strain B-3501A) (Filobasidiella neoformans)).